The sequence spans 206 residues: Accelerated cell death 11 (206 aa).

5 residues coordinate an N-acylsphingoid base 1-phosphate: Asp-60, Lys-64, Arg-99, Arg-103, and His-143.

This sequence belongs to the GLTP family. Interacts with BPA1, PRA1F2 and PRA1F3.

It localises to the cytoplasm. Exhibits selective intermembrane transfer of ceramide-1-phosphate (C1P) and phytoceramide-1-phosphate. Does not transport ceramide (Cer) or GalCer, suggesting a requirement for phosphate in the headgroup for functionality. Transports in vitro sphingosine, but not glycosphingolipids. Also has some in vitro activity with sphingomyelin, a lipid not detected in plant tissues. The transport function may be not directly involved in regulating cell death. Rather, perturbations in the function of ACD11 or related components could be monitored by R-proteins, which then mediate defense and programmed cell death (PCD), as proposed in the guard hypothesis. C1P transfer is stimulated by phosphatidylserine in C1P source vesicles. Regulates autophagy, inflammasome mediated IL1B and IL18 processing, and pyroptosis, but not apoptosis. This chain is Accelerated cell death 11, found in Arabidopsis thaliana (Mouse-ear cress).